The primary structure comprises 454 residues: tRNA modification GTPase MnmE (454 aa).

Residues Arg23, Glu80, and Lys120 each coordinate (6S)-5-formyl-5,6,7,8-tetrahydrofolate. The TrmE-type G domain maps to 216 to 377 (TIKIVIAGPP…LKNKILEITT (162 aa)). Residue Asn226 participates in K(+) binding. GTP-binding positions include 226–231 (NVGKSS), 245–251 (TNIPGTT), and 270–273 (DTAG). Ser230 serves as a coordination point for Mg(2+). K(+)-binding residues include Thr245, Ile247, and Thr250. A Mg(2+)-binding site is contributed by Thr251. Lys454 contributes to the (6S)-5-formyl-5,6,7,8-tetrahydrofolate binding site.

It belongs to the TRAFAC class TrmE-Era-EngA-EngB-Septin-like GTPase superfamily. TrmE GTPase family. Homodimer. Heterotetramer of two MnmE and two MnmG subunits. K(+) serves as cofactor.

Its subcellular location is the cytoplasm. Functionally, exhibits a very high intrinsic GTPase hydrolysis rate. Involved in the addition of a carboxymethylaminomethyl (cmnm) group at the wobble position (U34) of certain tRNAs, forming tRNA-cmnm(5)s(2)U34. In Buchnera aphidicola subsp. Cinara cedri (strain Cc), this protein is tRNA modification GTPase MnmE.